We begin with the raw amino-acid sequence, 457 residues long: Ribosomal RNA-processing protein 8 (457 aa).

The interval 47–237 is disordered; it reads LEAASLSQQT…KSDSQESRAG (191 aa). Residues 51-61 show a composition bias toward polar residues; that stretch reads SLSQQTPSLPG. 3 positions are modified to phosphoserine: S62, S64, and S105. Positions 129–138 are enriched in basic and acidic residues; it reads GEEKGKRKCQ. Polar residues predominate over residues 139 to 183; that stretch reads EYSSLHLTQPLDSVDQTVHNSRTSTATIDPSKPSPESMSPNSSHT. Phosphoserine is present on residues S172 and S177. A compositionally biased stretch (basic residues) spans 184–203; that stretch reads LSRKQWRNRQKNKRRHKNKF. H282, G317, D335, D347, M348, and C364 together coordinate S-adenosyl-L-methionine.

This sequence belongs to the methyltransferase superfamily. RRP8 family. In terms of assembly, component of the eNoSC complex, composed of SIRT1, SUV39H1 and RRP8.

The protein resides in the nucleus. It is found in the nucleolus. Its function is as follows. Essential component of the eNoSC (energy-dependent nucleolar silencing) complex, a complex that mediates silencing of rDNA in response to intracellular energy status and acts by recruiting histone-modifying enzymes. The eNoSC complex is able to sense the energy status of cell: upon glucose starvation, elevation of NAD(+)/NADP(+) ratio activates SIRT1, leading to histone H3 deacetylation followed by dimethylation of H3 at 'Lys-9' (H3K9me2) by SUV39H1 and the formation of silent chromatin in the rDNA locus. In the complex, RRP8 binds to H3K9me2 and probably acts as a methyltransferase. Its substrates are however unknown. In Mus musculus (Mouse), this protein is Ribosomal RNA-processing protein 8 (Rrp8).